Reading from the N-terminus, the 301-residue chain is Ribosomal RNA small subunit methyltransferase H (301 aa).

Residues 31-33 (GGY), aspartate 49, phenylalanine 76, aspartate 97, and glutamine 104 contribute to the S-adenosyl-L-methionine site.

It belongs to the methyltransferase superfamily. RsmH family.

The protein localises to the cytoplasm. The catalysed reaction is cytidine(1402) in 16S rRNA + S-adenosyl-L-methionine = N(4)-methylcytidine(1402) in 16S rRNA + S-adenosyl-L-homocysteine + H(+). Functionally, specifically methylates the N4 position of cytidine in position 1402 (C1402) of 16S rRNA. The protein is Ribosomal RNA small subunit methyltransferase H of Ehrlichia ruminantium (strain Welgevonden).